Consider the following 184-residue polypeptide: ATP synthase subunit b (184 aa).

The chain crosses the membrane as a helical span at residues 16-36 (LIPPIPELVIGLIAFVIVFGF).

This sequence belongs to the ATPase B chain family. As to quaternary structure, F-type ATPases have 2 components, F(1) - the catalytic core - and F(0) - the membrane proton channel. F(1) has five subunits: alpha(3), beta(3), gamma(1), delta(1), epsilon(1). F(0) has three main subunits: a(1), b(2) and c(10-14). The alpha and beta chains form an alternating ring which encloses part of the gamma chain. F(1) is attached to F(0) by a central stalk formed by the gamma and epsilon chains, while a peripheral stalk is formed by the delta and b chains.

Its subcellular location is the cell membrane. Functionally, f(1)F(0) ATP synthase produces ATP from ADP in the presence of a proton or sodium gradient. F-type ATPases consist of two structural domains, F(1) containing the extramembraneous catalytic core and F(0) containing the membrane proton channel, linked together by a central stalk and a peripheral stalk. During catalysis, ATP synthesis in the catalytic domain of F(1) is coupled via a rotary mechanism of the central stalk subunits to proton translocation. Component of the F(0) channel, it forms part of the peripheral stalk, linking F(1) to F(0). In Streptomyces coelicolor (strain ATCC BAA-471 / A3(2) / M145), this protein is ATP synthase subunit b.